Consider the following 351-residue polypeptide: Transcriptional activator POG1 (351 aa).

Over residues 1–26 (MKQEPHRQSEEKEKPKGPMAVEREQH) the composition is skewed to basic and acidic residues. Residues 1–56 (MKQEPHRQSEEKEKPKGPMAVEREQHTSLSSGTTVTASTGDESTNSRPVESSQTEK) form a disordered region. The segment covering 27–56 (TSLSSGTTVTASTGDESTNSRPVESSQTEK) has biased composition (polar residues). Phosphoserine occurs at positions 152 and 168. 2 disordered regions span residues 234–256 (PGMG…TPVM) and 291–351 (QHQL…PPPT). A compositionally biased stretch (polar residues) spans 241–256 (QLPTMSSNSESQTPVM). Ser-314 bears the Phosphoserine mark.

It belongs to the POG1 family. In terms of processing, phosphorylated by CDC28.

It is found in the nucleus. Its function is as follows. Transcriptional activator which promotes cell cycle recovery with CLN2, after pheromone induced G1 arrest, probably inhibiting the ability of STE20 to activate the pheromone response pathway. Binds the promoters of genes that function in cell cycle regulation, cytoskeletal organization, and spindle assembly. May also be involved in stress-resistance. The protein is Transcriptional activator POG1 (POG1) of Saccharomyces cerevisiae (strain ATCC 204508 / S288c) (Baker's yeast).